The primary structure comprises 421 residues: Proton/sodium-glutamate symport protein (421 aa).

Residues 1-3 are Cytoplasmic-facing; it reads MRK. The chain crosses the membrane as a helical span at residues 4–24; that stretch reads IGLAWQIFIGLILGIIVGAIF. At 25 to 43 the chain is on the extracellular side; the sequence is YGNPKVAAYLQPIGDIFLR. A helical membrane pass occupies residues 44–64; the sequence is LIKMIVIPIVISSLVVGVASV. Residues 65–77 lie on the Cytoplasmic side of the membrane; it reads GDLKKLGKLGGKT. A helical membrane pass occupies residues 78–98; that stretch reads IIYFEIITTIAIVVGLLAANI. Residues 99–148 lie on the Extracellular side of the membrane; sequence FQPGAGVNMKSLEKTDIQSYVDTTNEVQHHSMVETFVNIVPKNIFESLST. A helical transmembrane segment spans residues 149 to 169; it reads GDMLPIIFFSVMFGLGVAAIG. The Cytoplasmic portion of the chain corresponds to 170–198; it reads EKGKPVLQFFQGTAEAMFYVTNQIMKFAP. Residues 199-219 traverse the membrane as a helical segment; sequence FGVFALIGVTVSKFGVESLIP. Residues 220–222 are Extracellular-facing; the sequence is LSK. A helical transmembrane segment spans residues 223–243; sequence LVIVVYATMLFFIFAVLGGVA. Position 244 (lysine 244) is a topological domain, cytoplasmic. The helical transmembrane segment at 245 to 265 threads the bilayer; sequence LFGINIFHIIKILKDELILAY. Residues 266–306 lie on the Extracellular side of the membrane; that stretch reads STASSETVLPRIMDKMEKFGCPKAITSFVIPTGYSFNLDGS. A helical membrane pass occupies residues 307 to 327; that stretch reads TLYQALAAIFIAQLYGIDMSV. The Cytoplasmic segment spans residues 328–330; it reads SQQ. 2 helical membrane passes run 331 to 351 and 352 to 372; these read ISLL…PGVS and FVVL…LAFI. Residues 373–421 are Cytoplasmic-facing; that stretch reads AGIDRILDMARTAVNVIGNSLAAIIMSKWEGQYNEEKGKQYLAELQQSA.

Belongs to the dicarboxylate/amino acid:cation symporter (DAACS) (TC 2.A.23) family. Homotrimer.

The protein resides in the cell membrane. Its function is as follows. This carrier protein is part of the Na(+)-dependent, binding-protein-independent glutamate-aspartate transport system. The chain is Proton/sodium-glutamate symport protein (gltT) from Bacillus caldotenax.